Here is a 149-residue protein sequence, read N- to C-terminus: Calmodulin (149 aa).

EF-hand domains follow at residues 8–43, 44–79, 81–116, and 117–149; these read EQIA…LGQN, PTEA…KMKD, DSEE…LGEK, and LTDE…MMSK. Ca(2+)-binding residues include Asp21, Asp23, Asp25, Thr27, Glu32, Asp57, Asp59, Asn61, Thr63, Glu68, Asp94, Asp96, Asn98, Glu105, Asp130, Asp132, Asp134, Gln136, and Glu141.

Belongs to the calmodulin family.

Calmodulin mediates the control of a large number of enzymes, ion channels and other proteins by Ca(2+). Among the enzymes to be stimulated by the calmodulin-Ca(2+) complex are a number of protein kinases and phosphatases. The protein is Calmodulin of Globisporangium splendens (Leaf rot fungus).